A 620-amino-acid polypeptide reads, in one-letter code: Estrogen receptor (620 aa).

2 stretches are compositionally biased toward polar residues: residues 1 to 10 (MSKRQSSVQI) and 101 to 111 (GSLQSLGSGPT). Disordered regions lie at residues 1–55 (MSKR…RGSG) and 88–111 (YSAP…SGPT). The interval 1–185 (MSKRQSSVQI…GFEMAKDTRF (185 aa)) is modulating. 2 NR C4-type zinc fingers span residues 186 to 206 (CAVC…CEGC) and 222 to 246 (CPAT…LRKC). A DNA-binding region (nuclear receptor) is located at residues 186–251 (CAVCSDYASG…RLRKCYEVGM (66 aa)). The tract at residues 252–314 (MKGGVRKDRI…GGGRLSVTSI (63 aa)) is hinge. Residues 286-308 (KTVHYDGRKRSSTGGGGGGGGGR) form a disordered region. Gly residues predominate over residues 298–308 (TGGGGGGGGGR). The NR LBD domain occupies 315–551 (PPEQVLLLLQ…DLLLEMLDAH (237 aa)). The interval 558–620 (RAPQSLSQVD…RPDCTPALQD (63 aa)) is disordered.

It belongs to the nuclear hormone receptor family. NR3 subfamily. Binds DNA as a homodimer. Can form a heterodimer with ER-beta. As to expression, widely expressed in brain, ovary, testis, and female liver.

Its subcellular location is the nucleus. In terms of biological role, the steroid hormones and their receptors are involved in the regulation of eukaryotic gene expression and affect cellular proliferation and differentiation in target tissues. The sequence is that of Estrogen receptor (esr1) from Oryzias latipes (Japanese rice fish).